The primary structure comprises 402 residues: Putative F-box protein At3g23960 (402 aa).

Residues 1–23 (MRSRQLHNVSEDRETLSRRNKRS) form a disordered region. Positions 26 to 73 (SLNGHIPIDLLIEIFLKLPVKSIATCRSVSKFWTYVLGRQDFTELFLT) constitute an F-box domain.

This is Putative F-box protein At3g23960 from Arabidopsis thaliana (Mouse-ear cress).